The sequence spans 44 residues: SGPWMCYPGYAFKVPALPGCRPVLLLQCNGSQVPEAVLRDCCQQ.

Residues Cys-20 and Cys-41 are joined by a disulfide bond.

It belongs to the protease inhibitor I6 (cereal trypsin/alpha-amylase inhibitor) family. In terms of assembly, homodimer. The disulfide bonds are essential for the inhibitor activity. As to expression, endosperm.

Its subcellular location is the secreted. In terms of biological role, alpha-amylase inhibitor. The chain is Alpha-amylase inhibitor WDAI-3 (IHA-B1-2) from Triticum aestivum (Wheat).